The chain runs to 545 residues: ATP synthase subunit alpha (545 aa).

173–180 (GDRQTGKS) is a binding site for ATP.

The protein belongs to the ATPase alpha/beta chains family. In terms of assembly, F-type ATPases have 2 components, CF(1) - the catalytic core - and CF(0) - the membrane proton channel. CF(1) has five subunits: alpha(3), beta(3), gamma(1), delta(1), epsilon(1). CF(0) has three main subunits: a(1), b(2) and c(9-12). The alpha and beta chains form an alternating ring which encloses part of the gamma chain. CF(1) is attached to CF(0) by a central stalk formed by the gamma and epsilon chains, while a peripheral stalk is formed by the delta and b chains.

The protein localises to the cell membrane. The enzyme catalyses ATP + H2O + 4 H(+)(in) = ADP + phosphate + 5 H(+)(out). In terms of biological role, produces ATP from ADP in the presence of a proton gradient across the membrane. The alpha chain is a regulatory subunit. The protein is ATP synthase subunit alpha of Pseudarthrobacter chlorophenolicus (strain ATCC 700700 / DSM 12829 / CIP 107037 / JCM 12360 / KCTC 9906 / NCIMB 13794 / A6) (Arthrobacter chlorophenolicus).